The primary structure comprises 547 residues: Glucose-6-phosphate isomerase (547 aa).

The Proton donor role is filled by Glu353. Residues His384 and Lys512 contribute to the active site.

It belongs to the GPI family.

Its subcellular location is the cytoplasm. The catalysed reaction is alpha-D-glucose 6-phosphate = beta-D-fructose 6-phosphate. It participates in carbohydrate biosynthesis; gluconeogenesis. It functions in the pathway carbohydrate degradation; glycolysis; D-glyceraldehyde 3-phosphate and glycerone phosphate from D-glucose: step 2/4. Catalyzes the reversible isomerization of glucose-6-phosphate to fructose-6-phosphate. This Pseudoalteromonas atlantica (strain T6c / ATCC BAA-1087) protein is Glucose-6-phosphate isomerase.